A 103-amino-acid chain; its full sequence is Pyrimidine/purine nucleoside phosphorylase (103 aa).

It belongs to the nucleoside phosphorylase PpnP family.

It carries out the reaction a purine D-ribonucleoside + phosphate = a purine nucleobase + alpha-D-ribose 1-phosphate. The catalysed reaction is adenosine + phosphate = alpha-D-ribose 1-phosphate + adenine. The enzyme catalyses cytidine + phosphate = cytosine + alpha-D-ribose 1-phosphate. It catalyses the reaction guanosine + phosphate = alpha-D-ribose 1-phosphate + guanine. It carries out the reaction inosine + phosphate = alpha-D-ribose 1-phosphate + hypoxanthine. The catalysed reaction is thymidine + phosphate = 2-deoxy-alpha-D-ribose 1-phosphate + thymine. The enzyme catalyses uridine + phosphate = alpha-D-ribose 1-phosphate + uracil. It catalyses the reaction xanthosine + phosphate = alpha-D-ribose 1-phosphate + xanthine. Its function is as follows. Catalyzes the phosphorolysis of diverse nucleosides, yielding D-ribose 1-phosphate and the respective free bases. Can use uridine, adenosine, guanosine, cytidine, thymidine, inosine and xanthosine as substrates. Also catalyzes the reverse reactions. The polypeptide is Pyrimidine/purine nucleoside phosphorylase (Nocardia farcinica (strain IFM 10152)).